A 423-amino-acid polypeptide reads, in one-letter code: UDP-N-acetylglucosamine 1-carboxyvinyltransferase 2 (423 aa).

Position 23–24 (23–24) interacts with phosphoenolpyruvate; that stretch reads KN. A UDP-N-acetyl-alpha-D-glucosamine-binding site is contributed by arginine 96. The active-site Proton donor is the cysteine 120. Cysteine 120 carries the 2-(S-cysteinyl)pyruvic acid O-phosphothioketal modification. Residues 125–129, aspartate 309, and valine 331 contribute to the UDP-N-acetyl-alpha-D-glucosamine site; that span reads RPIDL.

Belongs to the EPSP synthase family. MurA subfamily.

It localises to the cytoplasm. It carries out the reaction phosphoenolpyruvate + UDP-N-acetyl-alpha-D-glucosamine = UDP-N-acetyl-3-O-(1-carboxyvinyl)-alpha-D-glucosamine + phosphate. The protein operates within cell wall biogenesis; peptidoglycan biosynthesis. Functionally, cell wall formation. Adds enolpyruvyl to UDP-N-acetylglucosamine. The protein is UDP-N-acetylglucosamine 1-carboxyvinyltransferase 2 of Streptococcus agalactiae serotype Ia (strain ATCC 27591 / A909 / CDC SS700).